A 497-amino-acid polypeptide reads, in one-letter code: Probable cytosol aminopeptidase (497 aa).

Mn(2+)-binding residues include lysine 263 and aspartate 268. Lysine 275 is an active-site residue. Aspartate 286, aspartate 345, and glutamate 347 together coordinate Mn(2+). The active site involves arginine 349.

The protein belongs to the peptidase M17 family. Requires Mn(2+) as cofactor.

The protein localises to the cytoplasm. It catalyses the reaction Release of an N-terminal amino acid, Xaa-|-Yaa-, in which Xaa is preferably Leu, but may be other amino acids including Pro although not Arg or Lys, and Yaa may be Pro. Amino acid amides and methyl esters are also readily hydrolyzed, but rates on arylamides are exceedingly low.. The enzyme catalyses Release of an N-terminal amino acid, preferentially leucine, but not glutamic or aspartic acids.. Its function is as follows. Presumably involved in the processing and regular turnover of intracellular proteins. Catalyzes the removal of unsubstituted N-terminal amino acids from various peptides. This chain is Probable cytosol aminopeptidase, found in Sinorhizobium medicae (strain WSM419) (Ensifer medicae).